The chain runs to 354 residues: uncharacterized protein (354 aa).

An N-terminal signal peptide occupies residues 1 to 21 (MRYLLIVITFFMGFSSLPAWA).

This sequence to E.coli YbgO.

In terms of biological role, may be involved in a fimbrial system chaperoned by YqiH and exported by YqiG. This is an uncharacterized protein from Escherichia coli (strain K12).